The following is a 290-amino-acid chain: ATP synthase gamma chain (290 aa).

Belongs to the ATPase gamma chain family. As to quaternary structure, F-type ATPases have 2 components, CF(1) - the catalytic core - and CF(0) - the membrane proton channel. CF(1) has five subunits: alpha(3), beta(3), gamma(1), delta(1), epsilon(1). CF(0) has three main subunits: a, b and c.

The protein localises to the cell inner membrane. Functionally, produces ATP from ADP in the presence of a proton gradient across the membrane. The gamma chain is believed to be important in regulating ATPase activity and the flow of protons through the CF(0) complex. This Thiobacillus denitrificans (strain ATCC 25259 / T1) protein is ATP synthase gamma chain.